The chain runs to 554 residues: Hydroxylamine reductase (554 aa).

Residues C3, C6, C18, and C25 each coordinate [2Fe-2S] cluster. Residues H252, E276, C320, C408, C436, C461, E495, and K497 each coordinate hybrid [4Fe-2O-2S] cluster. C408 carries the cysteine persulfide modification.

The protein belongs to the HCP family. The cofactor is [2Fe-2S] cluster. Requires hybrid [4Fe-2O-2S] cluster as cofactor.

Its subcellular location is the cytoplasm. The enzyme catalyses A + NH4(+) + H2O = hydroxylamine + AH2 + H(+). Functionally, catalyzes the reduction of hydroxylamine to form NH(3) and H(2)O. The sequence is that of Hydroxylamine reductase from Shewanella sp. (strain MR-7).